The chain runs to 277 residues: Co-chaperone protein DjlA (277 aa).

Over 1-4 (MWGK) the chain is Periplasmic. Residues 5–28 (ILGAFFGFLLGGPFGLLLGLFLGH) traverse the membrane as a helical segment. Over 29–277 (KFDKARRNVY…DMIRKEKGFK (249 aa)) the chain is Cytoplasmic. The J domain occupies 211–277 (DAYEVLGVTE…DMIRKEKGFK (67 aa)).

Homodimer.

Its subcellular location is the cell inner membrane. Functionally, regulatory DnaK co-chaperone. Direct interaction between DnaK and DjlA is needed for the induction of the wcaABCDE operon, involved in the synthesis of a colanic acid polysaccharide capsule, possibly through activation of the RcsB/RcsC phosphotransfer signaling pathway. The colanic acid capsule may help the bacterium survive conditions outside the host. This Photobacterium profundum (strain SS9) protein is Co-chaperone protein DjlA.